Reading from the N-terminus, the 512-residue chain is NAD(P) transhydrogenase subunit alpha (512 aa).

The Cytoplasmic segment spans residues 1–400 (MLIGVPRELL…KESKPTDPRV (400 aa)). NAD(+)-binding positions include 125 to 128 (QALD), valine 175, 195 to 197 (DSR), and glycine 225. The tract at residues 375–394 (SAQPKQETKAAPVAEKKESK) is disordered. 2 helical membrane-spanning segments follow: residues 401–421 (KYGVMAGVGVLFLWLASVAPA) and 422–442 (AFLSHFTVFVLACVVGYYVVW). The Cytoplasmic portion of the chain corresponds to 443-451 (NVSHALHTP). Residues 452–472 (LMAVTNAISGIIIVGALLQIR) traverse the membrane as a helical segment. Residues 473–478 (QPTGNL) lie on the Periplasmic side of the membrane. A helical transmembrane segment spans residues 479-499 (FIDALAFVAILVASINIFGGF). Residues 500–512 (RVTQRMLAMFRKG) are Cytoplasmic-facing.

Belongs to the AlaDH/PNT family. In terms of assembly, heterodimer of an alpha (PntA) and a beta (PntB) chain.

The protein resides in the cell inner membrane. It catalyses the reaction NAD(+) + NADPH + H(+)(in) = NADH + NADP(+) + H(+)(out). Functionally, the transhydrogenation between NADH and NADP is coupled to respiration and ATP hydrolysis and functions as a proton pump across the membrane. This is NAD(P) transhydrogenase subunit alpha (pntA) from Haemophilus influenzae (strain ATCC 51907 / DSM 11121 / KW20 / Rd).